Here is a 2144-residue protein sequence, read N- to C-terminus: Polyketide synthase-like protein Preu9 (2144 aa).

Residues 1–250 (MYALHLAVNA…GANAHCIIDH (250 aa)) form the Ketosynthase family 3 (KS3) domain. Positions 276–325 (QNGHLNEFAANGTTNAPSRDHRNGITDGRADGNTNGHPNANGDVGGNPIN) are disordered. Residues 293–305 (SRDHRNGITDGRA) show a composition bias toward basic and acidic residues. The interval 435–738 (FVFTGQGAQW…KSPVEQILKS (304 aa)) is malonyl-CoA:ACP transacylase (MAT). Residues 827 to 965 (HDLLGSKVVG…GCVKLIIKSS (139 aa)) form an N-terminal hotdog fold region. A dehydratase (DH) domain region spans residues 827–1137 (HDLLGSKVVG…ERLRCVSYSR (311 aa)). Residues 827 to 1141 (HDLLGSKVVG…CVSYSRISSD (315 aa)) form the PKS/mFAS DH domain. H859 serves as the catalytic Proton acceptor; for dehydratase activity. The tract at residues 979–1141 (TLRPVDVRAW…CVSYSRISSD (163 aa)) is C-terminal hotdog fold. The Proton donor; for dehydratase activity role is filled by D1050. The methyltransferase (MT) domain stretch occupies residues 1305 to 1494 (TGIYPQLHRI…GLDVVLDDFP (190 aa)). An enoyl reductase (ER) domain region spans residues 1731 to 2042 (GVPNSLCFAS…LANMIGKLVV (312 aa)).

Functionally, polyketide synthase-like protein that lacks important domains such as carrier domain and does probably not function as a polyketide synthase. This Preussia isomera (Coprophilous fungus) protein is Polyketide synthase-like protein Preu9.